The primary structure comprises 295 residues: MDAKIMITSPTTWPSPAKLNLFLYINGRTDNGYHELQTLFQFLDHGDQLTITVNDSGHITLTPDIVDLPVEQNLIWKAANALKKKTGCTLGANIHLNKILPMGGGIGGGSSNAATALVALNFLWQLGLSDDELADIGLKLGADVPVFVRGHAAFAEGVGEKLTPAQPEEKWYLVVRPDVHIATVDIFTHPDLTRNTPKRSLETLLDSEYGNDCEKIVRMIHPKVDKQLSWLLQYAPSRLTGTGSCVFAEFNSRSEAESILAQLSDNVSAFVAQGRNISPLKETLADYLSAQNRPI.

The active site involves lysine 18. Position 101-111 (101-111 (PMGGGIGGGSS)) interacts with ATP. Aspartate 143 is an active-site residue.

The protein belongs to the GHMP kinase family. IspE subfamily.

It carries out the reaction 4-CDP-2-C-methyl-D-erythritol + ATP = 4-CDP-2-C-methyl-D-erythritol 2-phosphate + ADP + H(+). It functions in the pathway isoprenoid biosynthesis; isopentenyl diphosphate biosynthesis via DXP pathway; isopentenyl diphosphate from 1-deoxy-D-xylulose 5-phosphate: step 3/6. Its function is as follows. Catalyzes the phosphorylation of the position 2 hydroxy group of 4-diphosphocytidyl-2C-methyl-D-erythritol. This Vibrio vulnificus (strain YJ016) protein is 4-diphosphocytidyl-2-C-methyl-D-erythritol kinase.